We begin with the raw amino-acid sequence, 141 residues long: Nucleoside diphosphate kinase (141 aa).

ATP is bound by residues K11, F59, R87, T93, R104, and N114. The active-site Pros-phosphohistidine intermediate is the H117.

The protein belongs to the NDK family. In terms of assembly, homotetramer. Mg(2+) is required as a cofactor.

The protein resides in the cytoplasm. It catalyses the reaction a 2'-deoxyribonucleoside 5'-diphosphate + ATP = a 2'-deoxyribonucleoside 5'-triphosphate + ADP. The catalysed reaction is a ribonucleoside 5'-diphosphate + ATP = a ribonucleoside 5'-triphosphate + ADP. Functionally, major role in the synthesis of nucleoside triphosphates other than ATP. The ATP gamma phosphate is transferred to the NDP beta phosphate via a ping-pong mechanism, using a phosphorylated active-site intermediate. The polypeptide is Nucleoside diphosphate kinase (Acidovorax sp. (strain JS42)).